A 605-amino-acid polypeptide reads, in one-letter code: Elongation factor 4 (605 aa).

In terms of domain architecture, tr-type G spans A5–K187. Residues D17 to T22 and N134 to D137 each bind GTP.

It belongs to the TRAFAC class translation factor GTPase superfamily. Classic translation factor GTPase family. LepA subfamily.

The protein resides in the cell inner membrane. It catalyses the reaction GTP + H2O = GDP + phosphate + H(+). Its function is as follows. Required for accurate and efficient protein synthesis under certain stress conditions. May act as a fidelity factor of the translation reaction, by catalyzing a one-codon backward translocation of tRNAs on improperly translocated ribosomes. Back-translocation proceeds from a post-translocation (POST) complex to a pre-translocation (PRE) complex, thus giving elongation factor G a second chance to translocate the tRNAs correctly. Binds to ribosomes in a GTP-dependent manner. The polypeptide is Elongation factor 4 (Novosphingobium aromaticivorans (strain ATCC 700278 / DSM 12444 / CCUG 56034 / CIP 105152 / NBRC 16084 / F199)).